The primary structure comprises 604 residues: Cell division cycle protein CDT1 (604 aa).

The protein belongs to the Cdt1 family. Associates with the MCM2-7 complex. Interacts with MCM2, ORC1, ORC2 and ORC6.

It localises to the cytoplasm. The protein resides in the nucleus. In terms of biological role, DNA replication licensing factor, required for pre-replication complex assembly. Faithful duplication of the genetic material requires 'once per cell cycle' DNA replication initiation and elongation. Central to this control is the tightly regulated formation of prereplicative complexes (preRCs) at future origins of DNA replication. Required for the recruitment of the MCM2-7 helicase complex to the replication origins. In Saccharomyces cerevisiae (strain ATCC 204508 / S288c) (Baker's yeast), this protein is Cell division cycle protein CDT1 (TAH11).